The chain runs to 325 residues: CRISPR-associated endonuclease Cas1 2 (325 aa).

Mn(2+) contacts are provided by Glu145, His212, and Asp225. Residues 283–325 are disordered; the sequence is EEEDPVEEDPTRPGGLWDLEGEVEGGVAYGGDDPGEGAEEPEG. The segment covering 315–325 has biased composition (acidic residues); sequence DPGEGAEEPEG.

The protein belongs to the CRISPR-associated endonuclease Cas1 family. Homodimer, forms a heterotetramer with a Cas2 homodimer. It depends on Mg(2+) as a cofactor. Mn(2+) is required as a cofactor.

CRISPR (clustered regularly interspaced short palindromic repeat), is an adaptive immune system that provides protection against mobile genetic elements (viruses, transposable elements and conjugative plasmids). CRISPR clusters contain spacers, sequences complementary to antecedent mobile elements, and target invading nucleic acids. CRISPR clusters are transcribed and processed into CRISPR RNA (crRNA). Acts as a dsDNA endonuclease. Involved in the integration of spacer DNA into the CRISPR cassette. This Thermus thermophilus (strain ATCC 27634 / DSM 579 / HB8) protein is CRISPR-associated endonuclease Cas1 2.